A 131-amino-acid chain; its full sequence is Small ribosomal subunit protein uS8 (131 aa).

Belongs to the universal ribosomal protein uS8 family. As to quaternary structure, part of the 30S ribosomal subunit. Contacts proteins S5 and S12.

In terms of biological role, one of the primary rRNA binding proteins, it binds directly to 16S rRNA central domain where it helps coordinate assembly of the platform of the 30S subunit. The chain is Small ribosomal subunit protein uS8 from Campylobacter hominis (strain ATCC BAA-381 / DSM 21671 / CCUG 45161 / LMG 19568 / NCTC 13146 / CH001A).